The sequence spans 211 residues: Small ribosomal subunit protein uS5 (211 aa).

The region spanning 58–121 (FEERIVKLKR…KKAHNSIHTV (64 aa)) is the S5 DRBM domain.

This sequence belongs to the universal ribosomal protein uS5 family. As to quaternary structure, part of the 30S ribosomal subunit. Contacts proteins S4 and S8.

Functionally, with S4 and S12 plays an important role in translational accuracy. Its function is as follows. Located at the back of the 30S subunit body where it stabilizes the conformation of the head with respect to the body. The sequence is that of Small ribosomal subunit protein uS5 from Mycoplasma genitalium (strain ATCC 33530 / DSM 19775 / NCTC 10195 / G37) (Mycoplasmoides genitalium).